Consider the following 515-residue polypeptide: 2-isopropylmalate synthase (515 aa).

The region spanning 4–264 (VKIFDTTLRD…NIGINQDTTQ (261 aa)) is the Pyruvate carboxyltransferase domain. Positions 13, 201, 203, and 237 each coordinate Mn(2+). Positions 390-515 (ELDYLSVNTG…RQTTSAQEGI (126 aa)) are regulatory domain.

The protein belongs to the alpha-IPM synthase/homocitrate synthase family. LeuA type 1 subfamily. As to quaternary structure, homodimer. Mn(2+) is required as a cofactor.

It is found in the cytoplasm. The enzyme catalyses 3-methyl-2-oxobutanoate + acetyl-CoA + H2O = (2S)-2-isopropylmalate + CoA + H(+). Its pathway is amino-acid biosynthesis; L-leucine biosynthesis; L-leucine from 3-methyl-2-oxobutanoate: step 1/4. Its function is as follows. Catalyzes the condensation of the acetyl group of acetyl-CoA with 3-methyl-2-oxobutanoate (2-ketoisovalerate) to form 3-carboxy-3-hydroxy-4-methylpentanoate (2-isopropylmalate). This Halothermothrix orenii (strain H 168 / OCM 544 / DSM 9562) protein is 2-isopropylmalate synthase.